The following is a 344-amino-acid chain: HTH-type transcriptional regulator MalR (344 aa).

Residues 1–54 form the HTH lacI-type domain; it reads MTTRLADIAAQAGVSEATVSRVLNGKPGVAATTRQSVLAALDVLGYERPVRLRQ. Positions 5–24 form a DNA-binding region, H-T-H motif; sequence LADIAAQAGVSEATVSRVLN.

Its function is as follows. Transcriptional repressor of the maltosaccharide utilization operon malEFG. The polypeptide is HTH-type transcriptional regulator MalR (malR) (Streptomyces coelicolor (strain ATCC BAA-471 / A3(2) / M145)).